The sequence spans 268 residues: Protein MGF 300-1L (268 aa).

At methionine 1–asparagine 175 the chain is on the cytoplasmic side. The helical transmembrane segment at tyrosine 176–tyrosine 193 threads the bilayer. The Extracellular segment spans residues threonine 194–tryptophan 268.

It belongs to the asfivirus MGF 300 family.

It is found in the host membrane. In terms of biological role, plays a role in virus cell tropism, and may be required for efficient virus replication in macrophages. The polypeptide is Protein MGF 300-1L (African swine fever virus (isolate Tick/South Africa/Pretoriuskop Pr4/1996) (ASFV)).